Here is a 143-residue protein sequence, read N- to C-terminus: Large ribosomal subunit protein uL15 (143 aa).

The disordered stretch occupies residues 1 to 56 (MQLNSIKPAAGAKHAKRRVGRGIGSGLGKTAGRGHKGQKSRAGGYHKVGFEGGQMP). Residues 21–31 (RGIGSGLGKTA) are compositionally biased toward gly residues.

It belongs to the universal ribosomal protein uL15 family. In terms of assembly, part of the 50S ribosomal subunit.

Its function is as follows. Binds to the 23S rRNA. In Verminephrobacter eiseniae (strain EF01-2), this protein is Large ribosomal subunit protein uL15.